Consider the following 191-residue polypeptide: Thymidine kinase (191 aa).

ATP-binding positions include 9–16 (GSMNSGKT) and 85–88 (DESQ). E86 (proton acceptor) is an active-site residue. Residues C143, C146, C181, and C184 each contribute to the Zn(2+) site.

The protein belongs to the thymidine kinase family. As to quaternary structure, homotetramer.

The protein resides in the cytoplasm. The enzyme catalyses thymidine + ATP = dTMP + ADP + H(+). This Listeria monocytogenes serovar 1/2a (strain ATCC BAA-679 / EGD-e) protein is Thymidine kinase.